Reading from the N-terminus, the 619-residue chain is Chaperone protein DnaK (619 aa).

Residue Thr179 is modified to Phosphothreonine; by autocatalysis. Positions 584–619 (QAKAQGAAGPQPGAQAQGQPNDGGKEDVVEAEVVDK) are disordered. Positions 585 to 605 (AKAQGAAGPQPGAQAQGQPND) are enriched in low complexity. Residues 606–619 (GGKEDVVEAEVVDK) are compositionally biased toward basic and acidic residues.

This sequence belongs to the heat shock protein 70 family.

In terms of biological role, acts as a chaperone. This is Chaperone protein DnaK from Elusimicrobium minutum (strain Pei191).